The chain runs to 47 residues: PhoP/PhoQ regulator MgrB (47 aa).

A helical transmembrane segment spans residues 6 to 26 (WVLLIVIIAGCLLLWTQMLNV).

The protein belongs to the MgrB family. As to quaternary structure, may form homooligomers. Probably interacts with the periplasmic domain of PhoQ.

It localises to the cell inner membrane. In terms of biological role, phoP-regulated transcription is redox-sensitive, being activated when the periplasm becomes more reducing. MgrB acts between DsbA/DsbB and PhoP/PhoQ in this pathway. Represses PhoP/PhoQ signaling, possibly by binding to the periplasmic domain of PhoQ, altering its activity and that of downstream effector PhoP. In Klebsiella pneumoniae (strain 342), this protein is PhoP/PhoQ regulator MgrB.